The chain runs to 375 residues: Growth/differentiation factor 8 (375 aa).

The signal sequence occupies residues 1–18 (MQKLQISVYIYLFVLILA). Residues 19 to 266 (GPVDLNENSE…VTDTPKRSRR (248 aa)) constitute a propeptide that is removed on maturation. An N-linked (GlcNAc...) asparagine glycan is attached at Asn71. Disulfide bonds link Cys272/Cys282, Cys281/Cys340, Cys309/Cys372, and Cys313/Cys374.

It belongs to the TGF-beta family. Homodimer; disulfide-linked. Interacts with WFIKKN2, leading to inhibit its activity. Interacts with FSTL3. Post-translationally, synthesized as large precursor molecule that undergoes proteolytic cleavage to generate an N-terminal propeptide and a disulfide linked C-terminal dimer, which is the biologically active molecule. The circulating form consists of a latent complex of the C-terminal dimer and other proteins, including its propeptide, which maintain the C-terminal dimer in a latent, inactive state. Ligand activation requires additional cleavage of the prodomain by a tolloid-like metalloproteinase.

It is found in the secreted. Its function is as follows. Acts specifically as a negative regulator of skeletal muscle growth. This chain is Growth/differentiation factor 8 (MSTN), found in Equus caballus (Horse).